A 360-amino-acid chain; its full sequence is NAD(P)H-quinone oxidoreductase subunit 1, chloroplastic (360 aa).

The next 9 helical transmembrane spans lie at 27–47 (IWIF…VLVI), 98–118 (FSIG…VIPF), 129–149 (IGIF…LMSG), 165–185 (AAQS…ISLL), 203–223 (FWGW…ISSL), 248–268 (YSGI…LISS), 269–289 (LFVT…ISIL), 297–317 (IFGT…FLFI), and 340–360 (FLLP…LFSL).

The protein belongs to the complex I subunit 1 family. NDH is composed of at least 16 different subunits, 5 of which are encoded in the nucleus.

The protein localises to the plastid. It localises to the chloroplast thylakoid membrane. The catalysed reaction is a plastoquinone + NADH + (n+1) H(+)(in) = a plastoquinol + NAD(+) + n H(+)(out). It carries out the reaction a plastoquinone + NADPH + (n+1) H(+)(in) = a plastoquinol + NADP(+) + n H(+)(out). NDH shuttles electrons from NAD(P)H:plastoquinone, via FMN and iron-sulfur (Fe-S) centers, to quinones in the photosynthetic chain and possibly in a chloroplast respiratory chain. The immediate electron acceptor for the enzyme in this species is believed to be plastoquinone. Couples the redox reaction to proton translocation, and thus conserves the redox energy in a proton gradient. The sequence is that of NAD(P)H-quinone oxidoreductase subunit 1, chloroplastic from Lepidium virginicum (Virginia pepperweed).